Consider the following 195-residue polypeptide: ATP-dependent Clp protease proteolytic subunit (195 aa).

Ser96 (nucleophile) is an active-site residue. Residue His121 is part of the active site.

It belongs to the peptidase S14 family. As to quaternary structure, fourteen ClpP subunits assemble into 2 heptameric rings which stack back to back to give a disk-like structure with a central cavity, resembling the structure of eukaryotic proteasomes.

The protein resides in the cytoplasm. It catalyses the reaction Hydrolysis of proteins to small peptides in the presence of ATP and magnesium. alpha-casein is the usual test substrate. In the absence of ATP, only oligopeptides shorter than five residues are hydrolyzed (such as succinyl-Leu-Tyr-|-NHMec, and Leu-Tyr-Leu-|-Tyr-Trp, in which cleavage of the -Tyr-|-Leu- and -Tyr-|-Trp bonds also occurs).. Functionally, cleaves peptides in various proteins in a process that requires ATP hydrolysis. Has a chymotrypsin-like activity. Plays a major role in the degradation of misfolded proteins. The chain is ATP-dependent Clp protease proteolytic subunit from Elusimicrobium minutum (strain Pei191).